Here is a 167-residue protein sequence, read N- to C-terminus: ATP synthase subunit b (167 aa).

The chain crosses the membrane as a helical span at residues 8-28 (AEAEFWVGAGLLIFLGIVFFG).

This sequence belongs to the ATPase B chain family. As to quaternary structure, F-type ATPases have 2 components, F(1) - the catalytic core - and F(0) - the membrane proton channel. F(1) has five subunits: alpha(3), beta(3), gamma(1), delta(1), epsilon(1). F(0) has three main subunits: a(1), b(2) and c(10-14). The alpha and beta chains form an alternating ring which encloses part of the gamma chain. F(1) is attached to F(0) by a central stalk formed by the gamma and epsilon chains, while a peripheral stalk is formed by the delta and b chains.

The protein resides in the cell inner membrane. In terms of biological role, f(1)F(0) ATP synthase produces ATP from ADP in the presence of a proton or sodium gradient. F-type ATPases consist of two structural domains, F(1) containing the extramembraneous catalytic core and F(0) containing the membrane proton channel, linked together by a central stalk and a peripheral stalk. During catalysis, ATP synthesis in the catalytic domain of F(1) is coupled via a rotary mechanism of the central stalk subunits to proton translocation. Its function is as follows. Component of the F(0) channel, it forms part of the peripheral stalk, linking F(1) to F(0). The protein is ATP synthase subunit b of Phenylobacterium zucineum (strain HLK1).